Consider the following 804-residue polypeptide: DNA gyrase subunit B (804 aa).

The Toprim domain maps to 431 to 546 (CEMYIVEGDS…NGCVYIAQPP (116 aa)). Positions 437, 511, and 513 each coordinate Mg(2+).

This sequence belongs to the type II topoisomerase GyrB family. Heterotetramer, composed of two GyrA and two GyrB chains. In the heterotetramer, GyrA contains the active site tyrosine that forms a transient covalent intermediate with DNA, while GyrB binds cofactors and catalyzes ATP hydrolysis. It depends on Mg(2+) as a cofactor. Requires Mn(2+) as cofactor. Ca(2+) is required as a cofactor.

It localises to the cytoplasm. It catalyses the reaction ATP-dependent breakage, passage and rejoining of double-stranded DNA.. Its function is as follows. A type II topoisomerase that negatively supercoils closed circular double-stranded (ds) DNA in an ATP-dependent manner to modulate DNA topology and maintain chromosomes in an underwound state. Negative supercoiling favors strand separation, and DNA replication, transcription, recombination and repair, all of which involve strand separation. Also able to catalyze the interconversion of other topological isomers of dsDNA rings, including catenanes and knotted rings. Type II topoisomerases break and join 2 DNA strands simultaneously in an ATP-dependent manner. The sequence is that of DNA gyrase subunit B from Chlamydia muridarum (strain MoPn / Nigg).